The sequence spans 435 residues: Trigger factor (435 aa).

The PPIase FKBP-type domain maps to 161-246 (GKRVSIDFVG…VNKVEARELP (86 aa)).

This sequence belongs to the FKBP-type PPIase family. Tig subfamily.

It is found in the cytoplasm. It carries out the reaction [protein]-peptidylproline (omega=180) = [protein]-peptidylproline (omega=0). Involved in protein export. Acts as a chaperone by maintaining the newly synthesized protein in an open conformation. Functions as a peptidyl-prolyl cis-trans isomerase. The chain is Trigger factor from Vibrio campbellii (strain ATCC BAA-1116).